A 144-amino-acid chain; its full sequence is UPF0735 ACT domain-containing protein NT01CX_1681 (144 aa).

Residues 68 to 143 (TIGFLLSHKA…NVVKVSLIAM (76 aa)) enclose the ACT domain.

This sequence belongs to the UPF0735 family.

The protein is UPF0735 ACT domain-containing protein NT01CX_1681 of Clostridium novyi (strain NT).